The following is a 258-amino-acid chain: UPF0246 protein Pnec_1068 (258 aa).

Belongs to the UPF0246 family.

This is UPF0246 protein Pnec_1068 from Polynucleobacter necessarius subsp. necessarius (strain STIR1).